The sequence spans 139 residues: Growth factor (139 aa).

A signal peptide spans 1-19 (MSMKYLMLLFATMIIRSFA). Asn34 carries an N-linked (GlcNAc...) asparagine; by host glycan. The EGF-like domain occupies 41-81 (AIRLCGPEGDGYCLHGDCIHARDINGMYCRCSHGYTGIRCQ). 3 disulfides stabilise this stretch: Cys45–Cys58, Cys53–Cys69, and Cys71–Cys80. The N-linked (GlcNAc...) asparagine; by host glycan is linked to Asn95.

Belongs to the orthopoxvirus OPG019 family.

It is found in the secreted. In terms of biological role, stimulates cellular proliferation (hyperplasia)and mobility around infected cells to promote rapid and efficient spread of infection. The protein is Growth factor (OPG019) of Camelus.